Consider the following 329-residue polypeptide: Quinone oxidoreductase (329 aa).

An N-acetylalanine modification is found at Ala2. N6-acetyllysine is present on Lys23. NADP(+)-binding positions include Tyr53, 158 to 161 (SGGV), Gly181, His200, Asn229, 246 to 249 (VGSR), and 269 to 271 (VTL). At Ser248 the chain carries Phosphoserine. Lys296 bears the N6-succinyllysine mark.

This sequence belongs to the zinc-containing alcohol dehydrogenase family. Quinone oxidoreductase subfamily. In terms of assembly, homotetramer. As to expression, only very low amounts in the lens.

The protein resides in the cytoplasm. It catalyses the reaction 2 a quinone + NADPH + H(+) = 2 a 1,4-benzosemiquinone + NADP(+). Does not have alcohol dehydrogenase activity. Binds NADP and acts through a one-electron transfer process. Orthoquinones, such as 1,2-naphthoquinone or 9,10-phenanthrenequinone, are the best substrates (in vitro). May act in the detoxification of xenobiotics. Interacts with (AU)-rich elements (ARE) in the 3'-UTR of target mRNA species. Enhances the stability of mRNA coding for BCL2. NADPH binding interferes with mRNA binding. The sequence is that of Quinone oxidoreductase (CRYZ) from Homo sapiens (Human).